A 204-amino-acid chain; its full sequence is Leucyl/phenylalanyl-tRNA--protein transferase (204 aa).

It belongs to the L/F-transferase family.

The protein localises to the cytoplasm. The catalysed reaction is N-terminal L-lysyl-[protein] + L-leucyl-tRNA(Leu) = N-terminal L-leucyl-L-lysyl-[protein] + tRNA(Leu) + H(+). It catalyses the reaction N-terminal L-arginyl-[protein] + L-leucyl-tRNA(Leu) = N-terminal L-leucyl-L-arginyl-[protein] + tRNA(Leu) + H(+). It carries out the reaction L-phenylalanyl-tRNA(Phe) + an N-terminal L-alpha-aminoacyl-[protein] = an N-terminal L-phenylalanyl-L-alpha-aminoacyl-[protein] + tRNA(Phe). Its function is as follows. Functions in the N-end rule pathway of protein degradation where it conjugates Leu, Phe and, less efficiently, Met from aminoacyl-tRNAs to the N-termini of proteins containing an N-terminal arginine or lysine. The chain is Leucyl/phenylalanyl-tRNA--protein transferase from Rhizobium etli (strain CIAT 652).